Reading from the N-terminus, the 88-residue chain is Putative septation protein SpoVG (88 aa).

Belongs to the SpoVG family.

Functionally, could be involved in septation. The sequence is that of Putative septation protein SpoVG from Desulforudis audaxviator (strain MP104C).